The sequence spans 181 residues: CASP-like protein 2C1 (181 aa).

The Cytoplasmic portion of the chain corresponds to 1–7 (MALEIPK). The helical transmembrane segment at 8–28 (IEAILRGIAILLLVSTACLVG) threads the bilayer. Residues 29–49 (LDSQTKFVIVYEKEVTYKDLH) lie on the Extracellular side of the membrane. The helical transmembrane segment at 50–70 (ALVVLVYVDAVAAAYNLLQLC) threads the bilayer. The Cytoplasmic segment spans residues 71 to 98 (RCSVSALSKGNFKGSYRYLSWACFVLDQ). Residues 99 to 119 (LAAYTTFAAHSAALQHSVLGI) traverse the membrane as a helical segment. Residues 120–140 (TGAKVFQWMKWCNRFTRFCFQ) are Extracellular-facing. A helical membrane pass occupies residues 141 to 161 (IGGALTCGYIASVLMVMISFI). Residues 162–181 (SAFNLFRLYSPKHFLRLKGT) lie on the Cytoplasmic side of the membrane.

It belongs to the Casparian strip membrane proteins (CASP) family. Homodimer and heterodimers.

It is found in the cell membrane. The polypeptide is CASP-like protein 2C1 (Populus trichocarpa (Western balsam poplar)).